The primary structure comprises 248 residues: UDP-2,3-diacylglucosamine hydrolase (248 aa).

Residues aspartate 7, histidine 9, aspartate 40, asparagine 78, and histidine 113 each coordinate Mn(2+). Residue asparagine 78–arginine 79 participates in substrate binding. Substrate contacts are provided by aspartate 121, serine 159, threonine 163, lysine 166, and histidine 194. Positions 194 and 196 each coordinate Mn(2+).

This sequence belongs to the LpxH family. The cofactor is Mn(2+).

It localises to the cell inner membrane. It carries out the reaction UDP-2-N,3-O-bis[(3R)-3-hydroxytetradecanoyl]-alpha-D-glucosamine + H2O = 2-N,3-O-bis[(3R)-3-hydroxytetradecanoyl]-alpha-D-glucosaminyl 1-phosphate + UMP + 2 H(+). The protein operates within glycolipid biosynthesis; lipid IV(A) biosynthesis; lipid IV(A) from (3R)-3-hydroxytetradecanoyl-[acyl-carrier-protein] and UDP-N-acetyl-alpha-D-glucosamine: step 4/6. Functionally, hydrolyzes the pyrophosphate bond of UDP-2,3-diacylglucosamine to yield 2,3-diacylglucosamine 1-phosphate (lipid X) and UMP by catalyzing the attack of water at the alpha-P atom. Involved in the biosynthesis of lipid A, a phosphorylated glycolipid that anchors the lipopolysaccharide to the outer membrane of the cell. This Pseudomonas savastanoi pv. phaseolicola (strain 1448A / Race 6) (Pseudomonas syringae pv. phaseolicola (strain 1448A / Race 6)) protein is UDP-2,3-diacylglucosamine hydrolase.